The primary structure comprises 66 residues: Large ribosomal subunit protein uL29 (66 aa).

Belongs to the universal ribosomal protein uL29 family.

This is Large ribosomal subunit protein uL29 from Chelativorans sp. (strain BNC1).